Reading from the N-terminus, the 323-residue chain is GDP-L-fucose synthase 1 (323 aa).

Ala2 is subject to N-acetylalanine. NADP(+) is bound at residue 23-29; sequence GHRGLVG. Tyr149 serves as the catalytic Proton donor/acceptor. NADP(+)-binding positions include Lys153, 176 to 179, and His192; that span reads PTNL. Substrate is bound by residues Arg200, Trp215, Arg222, and Asp282.

The protein belongs to the NAD(P)-dependent epimerase/dehydratase family. Fucose synthase subfamily. In terms of assembly, binds and stabilizes MUR1. Homodimer. Highly expressed in roots and flowers, less abundant in leaves, stems and siliques.

It carries out the reaction GDP-beta-L-fucose + NADP(+) = GDP-4-dehydro-alpha-D-rhamnose + NADPH + H(+). The protein operates within nucleotide-sugar biosynthesis; GDP-L-fucose biosynthesis via de novo pathway; GDP-L-fucose from GDP-alpha-D-mannose: step 2/2. Catalyzes the two-step NADP-dependent conversion of GDP-4-dehydro-6-deoxy-D-mannose to GDP-fucose, involving an epimerase and a reductase reaction. Not involved in the synthesis of GDP-L-galactose from GDP-D-mannose. This chain is GDP-L-fucose synthase 1 (GER1), found in Arabidopsis thaliana (Mouse-ear cress).